The following is a 2271-amino-acid chain: MSKRQKAFHDSLANEKTRVRLYKSGKNWVKSGIKEIEMFKIMGLPFISHSLVSQDNQSISKKMTGYGLKTTAVIGGAFTVNMLHDQQAFAASDAPLTSELNTQSETVGNQNSTTIEASTSTADSTSVTKNSSSVQTSNSDTVSSEKSEKVTSTTNSTSNQQEKLTSTSESTSSKNTTSSSDTKSVASTSSTEQPINTSTNQSTASNNTSQSTTPSSVNLNKTSTTSTSTAPVKLRTFSRLAMSTFASAATTTAVTANTITVNKDNLKQYMTTSGNATYDQSTGIVTLTQDAYSQKGAITLGTRIDSNKSFHFSGKVNLGNKYEGHGNGGDGIGFAFSPGVLGETGLNGAAVGIGGLSNAFGFKLDTYHNTSKPNSAAKANADPSNVAGGGAFGAFVTTDSYGVATTYTSSSTADNAAKLNVQPTNNTFQDFDINYNGDTKVMTVKYAGQTWTRNISDWIAKSGTTNFSLSMTASTGGATNLQQVQFGTFEYTESAVTQVRYVDVTTGKDIIPPKTYSGNVDQVVTIDNQQSALTAKGYNYTSVDSSYASTYNDTNKTVKMTNAGQSVTYYFTDVKAPTVTVGNQTIEVGKTMNPIVLTTTDNGTGTVTNTVTGLPSGLSYDSATNSIIGTPTKIGQSTVTVVSTDQANNKSTTTFTINVVDTTAPTVTPIGDQSSEVYSPISPIKIATQDNSGNAVTNTVTGLPSGLTFDSTNNTISGTPTNIGTSTISIVSTDASGNKTTTTFKYEVTRNSMSDSVSTSGSTQQSQSVSTSKADSQSASTSTSGSIVVSTSASTSKSTSVSLSDSVSASKSLSTSESNSVSSSTSTSLVNSQSVSSSMSDSASKSTSLSDSISNSSSTEKSESLSTSTSDSLRTSTSLSDSLSMSTSGSLSKSQSLSTSISGSSSTSASLSDSTSNAISTSTSLSESASTSDSISISNSIANSQSASTSKSDSQSTSISLSTSDSKSMSTSESLSDSTSTSGSVSGSLSIAASQSVSTSTSDSMSTSEIVSDSISTSGSLSASDSKSMSVSSSMSTSQSGSTSESLSDSQSTSDSDSKSLSQSTSQSGSTSTSTSTSASVRTSESQSTSGSMSASQSDSMSISTSFSDSTSDSKSASTASSESISQSASTSTSGSVSTSTSLSTSNSERTSTSMSDSTSLSTSESDSISESTSTSDSISEAISASESTFISLSESNSTSDSESQSASAFLSESLSESTSESTSESVSSSTSESTSLSDSTSESGSTSTSLSNSTSGSTSISTSTSISESTSTFKSESVSTSLSMSTSTSLSDSTSLSTSLSDSTSDSKSDSLSTSMSTSDSISTSKSDSISTSTSLSGSTSESESDSTSSSESKSDSTSMSISMSQSTSGSTSTSTSTSLSDSTSTSLSLSASMNQSGVDSNSASQSASNSTSTSTSESDSQSTSSYTSQSTSQSESTSTSTSLSDSTSISKSTSQSGSVSTSASLSGSESESDSQSISTSASESTSESASTSLSDSTSTSNSGSASTSTSLNNSASASESDLSSTSLSDSTSASMQSSESDSQSTSASLSDSLSTSTSNRMSTIASLSTSVSTSESGSTSESTSESDSTSTSLSDSQSTSRSTSASGSASTSTSTSDSRSTSASTSTSMRTSTSDSQSMSLSTSTSTSMSDSTSLSDSVSDSTSDSTSASTSGSMSVSISLSDSTSTSTSASEVMSASISDSQSMSESVNDSESVSESNSESDSKSMSGSTSVSDSGSLSVSTSLRKSESVSESSSLSCSQSMSDSVSTSDSSSLSVSTSLRSSESVSESDSLSDSKSTSGSTSTSTSGSLSTSTSLSGSESVSESTSLSDSISMSDSTSTSDSDSLSGSISLSGSTSLSTSDSLSDSKSLSSSQSMSGSESTSTSVSDSQSSSTSNSQFDSMSISASESDSMSTSDSSSISGSNSTSTSLSTSDSMSGSVSVSTSTSLSDSISGSTSVSDSSSTSTSTSLSDSMSQSQSTSTSASGSLSTSISTSMSMSASTSSSQSTSVSTSLSTSDSISDSTSISISGSQSTVESESTSDSTSISDSESLSTSDSDSTSTSTSDSTSGSTSTSISESLSTSGSGSTSVSDSTSMSESNSSSVSMSQDKSDSTSISDSESVSTSTSTSLSTSDSTSTSESLSTSMSGSQSISDSTSTSMSGSTSTSESNSMHPSDSMSMHHTHSTSTSRLSSEATTSTSESQSTLSATSEVTKHNGTPAQSEKRLPDTGDSIKQNGLLGGVMTLLVGLGLMKRKKKKDENDQDDSQA.

A signal peptide spans 1 to 89 (MSKRQKAFHD…VNMLHDQQAF (89 aa)). Residues 90–230 (AASDAPLTSE…KTSTTSTSTA (141 aa)) are serine-rich repeat region 1, SRR1. The segment covering 100–111 (LNTQSETVGNQN) has biased composition (polar residues). The segment at 100 to 229 (LNTQSETVGN…NKTSTTSTST (130 aa)) is disordered. Low complexity predominate over residues 112–128 (STTIEASTSTADSTSVT). The span at 129–140 (KNSSSVQTSNSD) shows a compositional bias: polar residues. The segment covering 150–229 (VTSTTNSTSN…NKTSTTSTST (80 aa)) has biased composition (low complexity). Residues 231 to 751 (PVKLRTFSRL…TTFKYEVTRN (521 aa)) form a non-repeat region (NRR) region. The tract at residues 245–491 (FASAATTTAV…QQVQFGTFEY (247 aa)) is L-lectin module. Residues Asp365, Tyr367, Asn369, and Asp382 each contribute to the Ca(2+) site. Residues 492-571 (TESAVTQVRY…NAGQSVTYYF (80 aa)) form a beta-grasp module region. A cadherin-like module-1 region spans residues 572–659 (TDVKAPTVTV…KSTTTFTINV (88 aa)). Positions 573, 575, 601, 602, 645, 661, 663, 690, 691, and 734 each coordinate Ca(2+). A cadherin-like module-2 region spans residues 660–751 (VDTTAPTVTP…TTFKYEVTRN (92 aa)). Disordered stretches follow at residues 751–791 (NSMS…VVST) and 806–2242 (SVSA…NGLL). Composition is skewed to low complexity over residues 752–791 (SMSD…VVST), 806–1392 (SVSA…LSLS), and 1402–2214 (SNSA…ATSE). A serine-rich repeat region 2, SRR2 region spans residues 752–2232 (SMSDSVSTSG…AQSEKRLPDT (1481 aa)). Residues 2229-2233 (LPDTG) carry the LPXTG sorting signal motif. The residue at position 2232 (Thr2232) is a Pentaglycyl murein peptidoglycan amidated threonine. The propeptide at 2233–2271 (GDSIKQNGLLGGVMTLLVGLGLMKRKKKKDENDQDDSQA) is removed by sortase.

Belongs to the serine-rich repeat protein (SRRP) family. Proteolytically cleaved by a metalloprotease. In terms of processing, glycosylated. It is probable that most of the Ser residues in SSR1 and SSR2 are O-GlcNAcylated. Sequential glycosylation by sugar transferases are able to generate complex sugar polymorphisms.

The protein localises to the secreted. Its subcellular location is the cell wall. Mediates binding to human platelets, possibly through a receptor-ligand interaction. Probably associated with virulence in endovascular infection. Plays a positive role in biofilm formation, possibly by self-association via the non-repeat region (NRR or binding region, BR). Binds to and plays a role in human lung epithelial cell invasion via the L-lectin module of its NRR domain; N-acetylneuraminic acid (Neu5Ac) inhibits binding. Treatment of host cells with neuraminidase decreases adherence of S.aureus cells, suggesting SraP recognizes a host terminal Neu5Ac moiety as a receptor. This chain is Serine-rich adhesin for platelets, found in Staphylococcus aureus (strain NCTC 8325 / PS 47).